Consider the following 196-residue polypeptide: Probable malonic semialdehyde reductase RutE (196 aa).

Belongs to the nitroreductase family. HadB/RutE subfamily. It depends on FMN as a cofactor.

It carries out the reaction 3-hydroxypropanoate + NADP(+) = 3-oxopropanoate + NADPH + H(+). Its function is as follows. May reduce toxic product malonic semialdehyde to 3-hydroxypropionic acid, which is excreted. The sequence is that of Probable malonic semialdehyde reductase RutE from Klebsiella pneumoniae subsp. pneumoniae (strain ATCC 700721 / MGH 78578).